The following is a 127-amino-acid chain: Glycine cleavage system H protein (127 aa).

One can recognise a Lipoyl-binding domain in the interval 22–104 (EVVIGITHFA…YEGAWMVKVE (83 aa)). Lysine 63 is modified (N6-lipoyllysine).

The protein belongs to the GcvH family. As to quaternary structure, the glycine cleavage system is composed of four proteins: P, T, L and H. (R)-lipoate serves as cofactor.

Its function is as follows. The glycine cleavage system catalyzes the degradation of glycine. The H protein shuttles the methylamine group of glycine from the P protein to the T protein. Is also involved in protein lipoylation via its role as an octanoyl/lipoyl carrier protein intermediate. This chain is Glycine cleavage system H protein, found in Bacillus cereus (strain ATCC 10987 / NRS 248).